Consider the following 443-residue polypeptide: Thymidine phosphorylase (443 aa).

This sequence belongs to the thymidine/pyrimidine-nucleoside phosphorylase family. Homodimer.

It catalyses the reaction thymidine + phosphate = 2-deoxy-alpha-D-ribose 1-phosphate + thymine. The protein operates within pyrimidine metabolism; dTMP biosynthesis via salvage pathway; dTMP from thymine: step 1/2. The enzymes which catalyze the reversible phosphorolysis of pyrimidine nucleosides are involved in the degradation of these compounds and in their utilization as carbon and energy sources, or in the rescue of pyrimidine bases for nucleotide synthesis. The sequence is that of Thymidine phosphorylase from Aliivibrio salmonicida (strain LFI1238) (Vibrio salmonicida (strain LFI1238)).